Reading from the N-terminus, the 60-residue chain is Large ribosomal subunit protein bL32 (60 aa).

Over residues 1-23 (MAKHPVPKKKTSKSKRDMRRSHH) the composition is skewed to basic residues. Residues 1–34 (MAKHPVPKKKTSKSKRDMRRSHHALTAPNLTECP) form a disordered region. Zn(2+) contacts are provided by C33, C36, C46, and C49. Residues 33–49 (CPQCHGKKLSHHICPNC) form a C4-type zinc finger.

It belongs to the bacterial ribosomal protein bL32 family. In terms of assembly, part of the 50S ribosomal subunit. Contacts proteins L17 and L22. The cofactor is Zn(2+).

In terms of biological role, forms a cluster with L17 and L22, and with L22, a pair of 'tweezers' that hold together all the domains of the 23S rRNA. Interacts with the antibiotic troleandomycin which blocks the peptide exit tunnel. This is Large ribosomal subunit protein bL32 (rpmF) from Deinococcus radiodurans (strain ATCC 13939 / DSM 20539 / JCM 16871 / CCUG 27074 / LMG 4051 / NBRC 15346 / NCIMB 9279 / VKM B-1422 / R1).